The following is a 93-amino-acid chain: Small ribosomal subunit protein uS19 (93 aa).

It belongs to the universal ribosomal protein uS19 family.

Its function is as follows. Protein S19 forms a complex with S13 that binds strongly to the 16S ribosomal RNA. This is Small ribosomal subunit protein uS19 from Leuconostoc citreum (strain KM20).